The sequence spans 247 residues: Carboxy-S-adenosyl-L-methionine synthase (247 aa).

Residues Y39, 64 to 66 (GCS), 89 to 90 (DN), 117 to 118 (DI), N132, and R199 contribute to the S-adenosyl-L-methionine site.

The protein belongs to the class I-like SAM-binding methyltransferase superfamily. Cx-SAM synthase family. As to quaternary structure, homodimer.

It carries out the reaction prephenate + S-adenosyl-L-methionine = carboxy-S-adenosyl-L-methionine + 3-phenylpyruvate + H2O. Catalyzes the conversion of S-adenosyl-L-methionine (SAM) to carboxy-S-adenosyl-L-methionine (Cx-SAM). The protein is Carboxy-S-adenosyl-L-methionine synthase of Escherichia coli O139:H28 (strain E24377A / ETEC).